We begin with the raw amino-acid sequence, 89 residues long: Small ribosomal subunit protein uS15 (89 aa).

The protein belongs to the universal ribosomal protein uS15 family. Part of the 30S ribosomal subunit. Forms a bridge to the 50S subunit in the 70S ribosome, contacting the 23S rRNA.

One of the primary rRNA binding proteins, it binds directly to 16S rRNA where it helps nucleate assembly of the platform of the 30S subunit by binding and bridging several RNA helices of the 16S rRNA. Its function is as follows. Forms an intersubunit bridge (bridge B4) with the 23S rRNA of the 50S subunit in the ribosome. The polypeptide is Small ribosomal subunit protein uS15 (Cyanothece sp. (strain PCC 7425 / ATCC 29141)).